Reading from the N-terminus, the 449-residue chain is UDP-N-acetylmuramate--L-alanine ligase (449 aa).

Residue 113 to 119 (GSHGKTT) coordinates ATP.

This sequence belongs to the MurCDEF family.

The protein localises to the cytoplasm. It catalyses the reaction UDP-N-acetyl-alpha-D-muramate + L-alanine + ATP = UDP-N-acetyl-alpha-D-muramoyl-L-alanine + ADP + phosphate + H(+). It functions in the pathway cell wall biogenesis; peptidoglycan biosynthesis. Functionally, cell wall formation. This chain is UDP-N-acetylmuramate--L-alanine ligase, found in Hydrogenobaculum sp. (strain Y04AAS1).